We begin with the raw amino-acid sequence, 473 residues long: MALQTGEPRTLAEKIWDDHIVVSGGGCAPDLIYIDLHLVHEVTSPQAFDGLRLAGRRVRRPELTLATEDHNVPTVDIDQPIADPVSRTQVETLRRNCAEFGIRLHSMGDIEQGIVHVVGPQLGLTQPGMTIVCGDSHTSTHGAFGALAMGIGTSEVEHVLATQTLPLRPFKTMAVNVDGRLPDGVSAKDIILALIAKIGTGGGQGHVIEYRGSAIESLSMEGRMTICNMSIEAGARAGMVAPDETTYAFLRGRPHAPTGAQWDTALVYWQRLRTDVGAVFDTEVYLDAASLSPFVTWGTNPGQGVPLAAAVPDPQLMTDDAERQAAEKALAYMDLRPGTAMREIAVDAVFVGSCTNGRIEDLRVVAEVLRGRKVADGVRMLIVPGSMRVRAQAEAEGLGEIFTDAGAQWRQAGCSMCLGMNPDQLASGERCAATSNRNFEGRQGAGGRTHLVSPAVAAATAVRGTLSSPADLN.

3 residues coordinate [4Fe-4S] cluster: Cys354, Cys414, and Cys417.

It belongs to the aconitase/IPM isomerase family. LeuC type 1 subfamily. Heterodimer of LeuC and LeuD. It depends on [4Fe-4S] cluster as a cofactor.

The enzyme catalyses (2R,3S)-3-isopropylmalate = (2S)-2-isopropylmalate. It participates in amino-acid biosynthesis; L-leucine biosynthesis; L-leucine from 3-methyl-2-oxobutanoate: step 2/4. In terms of biological role, catalyzes the isomerization between 2-isopropylmalate and 3-isopropylmalate, via the formation of 2-isopropylmaleate. In Mycobacterium bovis (strain ATCC BAA-935 / AF2122/97), this protein is 3-isopropylmalate dehydratase large subunit.